The sequence spans 262 residues: uncharacterized protein (262 aa).

Residues 5–107 (PLISLDVEGV…MIEHKLRTFC (103 aa)) form the BTB domain. The 14-residue stretch at 182–195 (ISLPRNFTHIAHVG) folds into the CRIB domain.

This is an uncharacterized protein from Caenorhabditis elegans.